Here is a 100-residue protein sequence, read N- to C-terminus: Urease subunit gamma (100 aa).

The protein belongs to the urease gamma subunit family. In terms of assembly, heterotrimer of UreA (gamma), UreB (beta) and UreC (alpha) subunits. Three heterotrimers associate to form the active enzyme.

It localises to the cytoplasm. It carries out the reaction urea + 2 H2O + H(+) = hydrogencarbonate + 2 NH4(+). The protein operates within nitrogen metabolism; urea degradation; CO(2) and NH(3) from urea (urease route): step 1/1. The chain is Urease subunit gamma from Cereibacter sphaeroides (strain ATCC 17029 / ATH 2.4.9) (Rhodobacter sphaeroides).